Here is a 423-residue protein sequence, read N- to C-terminus: Osteomodulin (423 aa).

A signal peptide spans 1–20; the sequence is MGFLSPIYVLFFCFGVRVYC. Sulfotyrosine is present on residues Tyr22, Tyr25, Tyr31, Tyr39, Tyr51, and Tyr77. Residues 53–91 enclose the LRRNT domain; sequence VPFYNNILGCAKECFCPTNFPTSMYCDNRKLKTIPIIPM. LRR repeat units follow at residues 92-113, 116-129, 142-164, 165-184, 187-207, 213-233, 234-255, 258-279, 281-294, 301-322, and 331-353; these read HIQQ…SFIN, HLKE…KIKS, NLQQ…PKSL, ERLL…AMDG, NVTM…KEKT, KLMQ…GLPS, SLMY…YFDK, KLHA…IFNL, NLIE…KLKQ, NLEH…MICP, and HLTY…IFFC. Residues Asn113 and Asn121 are each glycosylated (N-linked (GlcNAc...) asparagine). N-linked (GlcNAc...) asparagine glycosylation occurs at Asn187. Residues Asn242 and Asn278 are each glycosylated (N-linked (GlcNAc...) asparagine). N-linked (GlcNAc...) asparagine glycosylation occurs at Asn316. Cys321 and Cys353 form a disulfide bridge. The interval 381–406 is disordered; sequence RSYQEEEEEDDHDSQDNTLEGQEVSD. 2 positions are modified to sulfotyrosine: Tyr413 and Tyr414.

The protein belongs to the small leucine-rich proteoglycan (SLRP) family. SLRP class II subfamily. Binds the alpha(V)beta(3)-integrin. Glycosylated; contains keratan sulfate. In terms of tissue distribution, bone specific.

It is found in the secreted. Its subcellular location is the extracellular space. The protein resides in the extracellular matrix. May be implicated in biomineralization processes. Has a function in binding of osteoblasts via the alpha(V)beta(3)-integrin. This Mus musculus (Mouse) protein is Osteomodulin (Omd).